The primary structure comprises 551 residues: uncharacterized protein (551 aa).

The transit peptide at 1–36 (MMALVRDRRAHYVMSIVIRWVHCFSSSLRGTFGTRW) directs the protein to the mitochondrion. The stretch at 203–315 (TNILLRKLKE…MDSRDRLREE (113 aa)) forms a coiled coil. The interval 354 to 389 (REASLSPWPKSPPSTTALRPHSATMSVSSAGAQKAK) is disordered. The span at 366–384 (PSTTALRPHSATMSVSSAG) shows a compositional bias: polar residues. A coiled-coil region spans residues 405 to 439 (KHGLESQIEALKANLENEKKKVERFRKEADRLNKS). Residues 519–551 (LQLSPKGKLSESPKEESLEEPSMRQSSPAETVD) form a disordered region. The segment covering 541-551 (MRQSSPAETVD) has biased composition (polar residues).

In terms of assembly, interacts with NOD2.

Its subcellular location is the mitochondrion. This is an uncharacterized protein from Homo sapiens (Human).